The primary structure comprises 440 residues: uncharacterized protein (440 aa).

A signal peptide spans 1–17 (MDRFFCTVWVWSVLFGA). Residue C18 is the site of N-palmitoyl cysteine attachment. C18 is lipidated: S-diacylglycerol cysteine. Residues 241-268 (SALQERPSSPEPVVSTIPSPEGEENSAA) form a disordered region.

The protein localises to the cell membrane. This is an uncharacterized protein from Treponema pallidum (strain Nichols).